Here is a 293-residue protein sequence, read N- to C-terminus: Shikimate dehydrogenase (NADP(+)) (293 aa).

Residues 20-22 (SLT) and T72 contribute to the shikimate site. Catalysis depends on K76, which acts as the Proton acceptor. Positions 97 and 112 each coordinate shikimate. NADP(+) contacts are provided by residues 136-140 (GAGGA) and I230. Residue Y232 coordinates shikimate. Residue G253 participates in NADP(+) binding.

This sequence belongs to the shikimate dehydrogenase family. Homodimer.

It catalyses the reaction shikimate + NADP(+) = 3-dehydroshikimate + NADPH + H(+). It participates in metabolic intermediate biosynthesis; chorismate biosynthesis; chorismate from D-erythrose 4-phosphate and phosphoenolpyruvate: step 4/7. In terms of biological role, involved in the biosynthesis of the chorismate, which leads to the biosynthesis of aromatic amino acids. Catalyzes the reversible NADPH linked reduction of 3-dehydroshikimate (DHSA) to yield shikimate (SA). The protein is Shikimate dehydrogenase (NADP(+)) of Pseudarthrobacter chlorophenolicus (strain ATCC 700700 / DSM 12829 / CIP 107037 / JCM 12360 / KCTC 9906 / NCIMB 13794 / A6) (Arthrobacter chlorophenolicus).